Here is a 117-residue protein sequence, read N- to C-terminus: Immunoglobulin kappa variable 1-27 (117 aa).

Residues 1–22 (MDMRVPAQLLGLLLLWLPDTRC) form the signal peptide. Residues 23–45 (DIQMTQSPSSLSASVGDRVTITC) form a framework-1 region. The Ig-like domain occupies 23–117 (DIQMTQSPSS…YYCQKYNSAP (95 aa)). The cysteines at positions 45 and 110 are disulfide-linked. The interval 46 to 56 (RASQGISNYLA) is complementarity-determining-1. Residues 57–71 (WYQQKPGKVPKLLIY) are framework-2. The complementarity-determining-2 stretch occupies residues 72–78 (AASTLQS). The tract at residues 79-110 (GVPSRFSGSGSGTDFTLTISSLQPEDVATYYC) is framework-3. The interval 111-117 (QKYNSAP) is complementarity-determining-3.

In terms of assembly, immunoglobulins are composed of two identical heavy chains and two identical light chains; disulfide-linked.

The protein localises to the secreted. It is found in the cell membrane. V region of the variable domain of immunoglobulin light chains that participates in the antigen recognition. Immunoglobulins, also known as antibodies, are membrane-bound or secreted glycoproteins produced by B lymphocytes. In the recognition phase of humoral immunity, the membrane-bound immunoglobulins serve as receptors which, upon binding of a specific antigen, trigger the clonal expansion and differentiation of B lymphocytes into immunoglobulins-secreting plasma cells. Secreted immunoglobulins mediate the effector phase of humoral immunity, which results in the elimination of bound antigens. The antigen binding site is formed by the variable domain of one heavy chain, together with that of its associated light chain. Thus, each immunoglobulin has two antigen binding sites with remarkable affinity for a particular antigen. The variable domains are assembled by a process called V-(D)-J rearrangement and can then be subjected to somatic hypermutations which, after exposure to antigen and selection, allow affinity maturation for a particular antigen. This Homo sapiens (Human) protein is Immunoglobulin kappa variable 1-27.